The sequence spans 72 residues: DNA-directed RNA polymerase subunit epsilon (72 aa).

The protein belongs to the RNA polymerase subunit epsilon family. RNAP is composed of a core of 2 alpha, a beta and a beta' subunit. The core is associated with a delta subunit, and at least one of epsilon or omega. When a sigma factor is associated with the core the holoenzyme is formed, which can initiate transcription.

It carries out the reaction RNA(n) + a ribonucleoside 5'-triphosphate = RNA(n+1) + diphosphate. A non-essential component of RNA polymerase (RNAP). The sequence is that of DNA-directed RNA polymerase subunit epsilon from Lactiplantibacillus plantarum (strain ATCC BAA-793 / NCIMB 8826 / WCFS1) (Lactobacillus plantarum).